A 402-amino-acid polypeptide reads, in one-letter code: uncharacterized protein (402 aa).

A signal peptide spans 1–44; the sequence is MLEKNLLPEILLAIHMPLNKGLTRVKAIVIIIVVIIAVIAGVVG. Residues 53-79 are disordered; that stretch reads NSVTTSSSSTTTSSSLSSTSISSSTTN.

This sequence belongs to the bacterial solute-binding protein 1 family. WtpA subfamily.

This is an uncharacterized protein from Saccharolobus solfataricus (strain ATCC 35092 / DSM 1617 / JCM 11322 / P2) (Sulfolobus solfataricus).